We begin with the raw amino-acid sequence, 623 residues long: Set1/Ash2 histone methyltransferase complex subunit ASH2 (623 aa).

The segment covering 1-18 has biased composition (gly residues); sequence MAAAGAGPGPGVSAGPGP. The segment at 1–62 adopts a PHD-type; atypical zinc-finger fold; sequence MAAAGAGPGP…SGEAESGDAN (62 aa). A disordered region spans residues 1 to 99; the sequence is MAAAGAGPGP…MDTQAGSVDE (99 aa). Positions 36–56 are enriched in low complexity; the sequence is AAGAGEGPSAAPGAEPSSGEA. Residues 63-172 form a DNA-binding region; it reads LVDVSGLETE…MCLSALANLT (110 aa). A compositionally biased stretch (polar residues) spans 84 to 95; the sequence is GDTSEVMDTQAG. S96 carries the post-translational modification Phosphoserine. The segment at 112 to 145 adopts a C4-type zinc-finger fold; it reads CGICTKWFTADTFGIDTSSCLPFMTNYSFHCNVC. The span at 230–247 shows a compositional bias: basic and acidic residues; it reads LVKEHPDPGSKDPEEDYP. Positions 230–326 are disordered; that stretch reads LVKEHPDPGS…AQRLPPHGYP (97 aa). Residues 265-277 are compositionally biased toward polar residues; the sequence is NQKQSSAVSASGN. A compositionally biased stretch (gly residues) spans 278–290; it reads LNGGIAAGSSGKG. R291 bears the Asymmetric dimethylarginine; by PRMT1 and PRMT5 mark. A Phosphoserine modification is found at S311. The interaction with RBBP5 stretch occupies residues 311–623; the sequence is SDPLFSAQRL…DGRRSPPWEP (313 aa). In terms of domain architecture, B30.2/SPRY spans 355 to 578; the sequence is LDCWAGKPIP…VSINFGPSFK (224 aa).

As to quaternary structure, interacts with HCFC1. Core component of several methyltransferase-containing complexes including MLL1/MLL, MLL2/3 (also named ASCOM complex) and MLL4/WBP7. Each complex is at least composed of ASH2L, RBBP5, WDR5, DPY30, one or more specific histone methyltransferases (KMT2A/MLL1, KMT2D/MLL2, KMT2C/MLL3 and KMT2B/MLL4), and the facultative components PAGR1, BACC1, CHD8, E2F6, HCFC1, HCFC2, HSP70, INO80C, KDM6A, KANSL1, LAS1L, MAX, MCRS1, MEN1, MGA, KAT8/MOF, NCOA6, PAXIP1/PTIP, PELP1, PHF20, PRP31, RING2, RUVB1/TIP49A, RUVB2/TIP49B, SENP3, TAF1, TAF4, TAF6, TAF7, TAF9, TEX10 and alpha- and beta-tubulin. Component of the SET1 complex, at least composed of the catalytic subunit (SETD1A or SETD1B), WDR5, WDR82, RBBP5, ASH2L/ASH2, CXXC1/CFP1, HCFC1 and DPY30. Found in a complex with RBBP5, ASH2L, DPY30, KMT2A, KMT2D and WDR5. Component of a histone methylation complex composed of at least ZNF335, RBBP5, ASH2L and WDR5; the complex may have histone H3-specific methyltransferase activity, however does not have specificity for 'Lys-4' of histone H3. Within the complex, interacts with ZNF335. Interacts with RBBP5. Components of this complex may associate with components of a nuclear receptor-mediated transcription complex to form a complex at least composed of ZNF335, HCFC1, CCAR2, EMSY, MKI67, RBBP5, ASH2L and WDR5. Within this complex also interacts with CCAR2 and EMSY. Interacts with DPY30. Interacts with SETD1A and SETD1B. In terms of processing, both monomethylated and dimethylated on arginine residues in the C-terminus. Arg-291 is the major site. Methylation is not required for nuclear localization, nor for MLL complex integrity or maintenance of global histone H3K4me3 levels. In terms of tissue distribution, ubiquitously expressed, with abundant expression in the heart, skeletal muscle and kidney. Low expression is seen in spleen, lung and testis.

Its subcellular location is the nucleus. Transcriptional regulator. Component or associated component of some histone methyltransferase complexes which regulates transcription through recruitment of those complexes to gene promoters. Component of the Set1/Ash2 histone methyltransferase (HMT) complex, a complex that specifically methylates 'Lys-4' of histone H3, but not if the neighboring 'Lys-9' residue is already methylated. As part of the MLL1/MLL complex it is involved in methylation and dimethylation at 'Lys-4' of histone H3. May play a role in hematopoiesis. In association with RBBP5 and WDR5, stimulates the histone methyltransferase activities of KMT2A, KMT2B, KMT2C, KMT2D, SETD1A and SETD1B. The protein is Set1/Ash2 histone methyltransferase complex subunit ASH2 (Ash2l) of Mus musculus (Mouse).